Here is a 304-residue protein sequence, read N- to C-terminus: E3 ubiquitin-protein ligase CCNB1IP1 homolog (304 aa).

Residues 3–42 (CNACWRDLEGRAISTTCGHLLCTEDASKILSNDGACPICD) form an RING-type; degenerate zinc finger. Residues 124–184 (TAYQKMGKRC…YESVKRTAIQ (61 aa)) are a coiled coil. The disordered stretch occupies residues 218–279 (SFFSPATPGP…GGGGTANPQS (62 aa)). Residues 235-250 (RQNSSNSGPFDISTDS) show a composition bias toward polar residues.

Expressed mostly in flower buds and roots.

Its subcellular location is the nucleus. It localises to the chromosome. It catalyses the reaction S-ubiquitinyl-[E2 ubiquitin-conjugating enzyme]-L-cysteine + [acceptor protein]-L-lysine = [E2 ubiquitin-conjugating enzyme]-L-cysteine + N(6)-ubiquitinyl-[acceptor protein]-L-lysine.. It functions in the pathway protein modification; protein ubiquitination. In terms of biological role, ubiquitin E3 ligase required for class I crossover (CO) formation during meiosis. The protein is E3 ubiquitin-protein ligase CCNB1IP1 homolog (HEI10) of Arabidopsis thaliana (Mouse-ear cress).